A 311-amino-acid chain; its full sequence is Aspartate carbamoyltransferase catalytic subunit (311 aa).

2 residues coordinate carbamoyl phosphate: arginine 55 and threonine 56. Lysine 85 contributes to the L-aspartate binding site. Arginine 106, histidine 135, and glutamine 138 together coordinate carbamoyl phosphate. Residues arginine 168 and arginine 230 each coordinate L-aspartate. Residues leucine 268 and proline 269 each contribute to the carbamoyl phosphate site.

Belongs to the aspartate/ornithine carbamoyltransferase superfamily. ATCase family. In terms of assembly, heterododecamer (2C3:3R2) of six catalytic PyrB chains organized as two trimers (C3), and six regulatory PyrI chains organized as three dimers (R2).

It catalyses the reaction carbamoyl phosphate + L-aspartate = N-carbamoyl-L-aspartate + phosphate + H(+). The protein operates within pyrimidine metabolism; UMP biosynthesis via de novo pathway; (S)-dihydroorotate from bicarbonate: step 2/3. Its function is as follows. Catalyzes the condensation of carbamoyl phosphate and aspartate to form carbamoyl aspartate and inorganic phosphate, the committed step in the de novo pyrimidine nucleotide biosynthesis pathway. This chain is Aspartate carbamoyltransferase catalytic subunit, found in Escherichia coli O139:H28 (strain E24377A / ETEC).